Consider the following 476-residue polypeptide: MNSAVEAQLAELGIEGYLKQHQYKSLLRFLTCGSVDDGKSTLIGRLLHDSKQIYEDQLAAVHSDSQRVGTTGEKPDLALLVDGLQAEREQGITIDVAYRYFSTQKRKFIIADTPGHEQYTRNMATGASTCDLAVILVDARKGVLDQTRRHSFISNLLGLKHFVVAINKMDLVDYSQERFEEIRDEYLQFSENLAGETDIQIIPLSALEGDNVVEKGQNLSWFEGPSLLELLETVDVDHEKGEGDFRFPVQYVNRPNLDFRGFAGTISSGSVKVGDAIKALPSGKTSTVARIVTFDGDVQEAQAGLAVTLTLNDEIDISRGDLLVLENAQVESTNHLLADVVWMTEQPLQPGRDYDIKIAGKKTVGHVEAIRHQYDINNLSTHGAAELPLNGIGLCEWSLNESVALDNYQDCADTGGFIIIDRLTNVTVGAGMVKESLAAVERGLADVSAFELELNALVRKHFPHWEAKDLSQLLKK.

One can recognise a tr-type G domain in the interval 24 to 239; the sequence is KSLLRFLTCG…LLETVDVDHE (216 aa). The G1 stretch occupies residues 33–40; the sequence is GSVDDGKS. 33-40 contributes to the GTP binding site; it reads GSVDDGKS. The G2 stretch occupies residues 91 to 95; that stretch reads GITID. The G3 stretch occupies residues 112–115; sequence DTPG. Residues 112-116 and 167-170 contribute to the GTP site; these read DTPGH and NKMD. The tract at residues 167-170 is G4; it reads NKMD. A G5 region spans residues 205 to 207; the sequence is SAL.

It belongs to the TRAFAC class translation factor GTPase superfamily. Classic translation factor GTPase family. CysN/NodQ subfamily. In terms of assembly, heterodimer composed of CysD, the smaller subunit, and CysN.

The enzyme catalyses sulfate + ATP + H(+) = adenosine 5'-phosphosulfate + diphosphate. It participates in sulfur metabolism; hydrogen sulfide biosynthesis; sulfite from sulfate: step 1/3. Functionally, with CysD forms the ATP sulfurylase (ATPS) that catalyzes the adenylation of sulfate producing adenosine 5'-phosphosulfate (APS) and diphosphate, the first enzymatic step in sulfur assimilation pathway. APS synthesis involves the formation of a high-energy phosphoric-sulfuric acid anhydride bond driven by GTP hydrolysis by CysN coupled to ATP hydrolysis by CysD. The sequence is that of Sulfate adenylyltransferase subunit 1 from Vibrio campbellii (strain ATCC BAA-1116).